The following is a 498-amino-acid chain: Glycerol kinase (498 aa).

Residue Thr-12 participates in ADP binding. ATP is bound by residues Thr-12, Thr-13, and Ser-14. Thr-12 contributes to the sn-glycerol 3-phosphate binding site. Arg-16 lines the ADP pocket. The sn-glycerol 3-phosphate site is built by Arg-82, Tyr-134, and Asp-243. Positions 82, 134, 243, and 244 each coordinate glycerol. Positions 265 and 308 each coordinate ADP. ATP contacts are provided by Thr-265, Gly-308, Gln-312, and Gly-411. Gly-411 serves as a coordination point for ADP.

It belongs to the FGGY kinase family.

It catalyses the reaction glycerol + ATP = sn-glycerol 3-phosphate + ADP + H(+). It participates in polyol metabolism; glycerol degradation via glycerol kinase pathway; sn-glycerol 3-phosphate from glycerol: step 1/1. Inhibited by fructose 1,6-bisphosphate (FBP). Key enzyme in the regulation of glycerol uptake and metabolism. Catalyzes the phosphorylation of glycerol to yield sn-glycerol 3-phosphate. This Brucella suis (strain ATCC 23445 / NCTC 10510) protein is Glycerol kinase.